The primary structure comprises 1133 residues: Probable cation-transporting ATPase 9 (1133 aa).

Over Met1–Ile6 the chain is Cytoplasmic. The chain crosses the membrane as a helical span at residues Glu7–Lys28. Topologically, residues Gln29–Arg34 are extracellular. A helical transmembrane segment spans residues Glu35–Arg53. Residues Pro54 to Thr167 lie on the Cytoplasmic side of the membrane. Residues Leu168–Ile190 form a helical membrane-spanning segment. The Extracellular segment spans residues Glu191–Met193. The helical transmembrane segment at Tyr194–Cys212 threads the bilayer. The Cytoplasmic portion of the chain corresponds to Ile213–Ala363. The helical transmembrane segment at Val364–Ser383 threads the bilayer. Over Arg384–Ala396 the chain is Extracellular. Residues Phe397–Thr418 traverse the membrane as a helical segment. The Cytoplasmic portion of the chain corresponds to Asn419–Leu887. Catalysis depends on Asp451, which acts as the 4-aspartylphosphate intermediate. Positions 827 and 831 each coordinate Mg(2+). A helical membrane pass occupies residues Gln888–Ser906. The Extracellular portion of the chain corresponds to Tyr907–Gln915. Residues Ala916–Asn931 form a helical membrane-spanning segment. The Cytoplasmic portion of the chain corresponds to Thr932–Ser948. A helical membrane pass occupies residues Ile949 to Ser972. Residues Leu973–Glu994 are Extracellular-facing. Residues Thr995–Ile1018 traverse the membrane as a helical segment. The Cytoplasmic portion of the chain corresponds to Gly1019–Thr1030. A helical transmembrane segment spans residues Ile1031–Val1050. At Leu1051 to Glu1101 the chain is on the extracellular side. The helical transmembrane segment at Val1102 to Leu1124 threads the bilayer. The Cytoplasmic segment spans residues Arg1125–Phe1133.

It belongs to the cation transport ATPase (P-type) (TC 3.A.3) family. Type V subfamily.

Its subcellular location is the membrane. It catalyses the reaction ATP + H2O = ADP + phosphate + H(+). This Tetrahymena thermophila protein is Probable cation-transporting ATPase 9 (TPA9).